The sequence spans 137 residues: Proofreading thioesterase EntH (137 aa).

Glu-63 acts as the Nucleophile or proton acceptor in catalysis.

Belongs to the thioesterase PaaI family. In terms of assembly, homotetramer. Dimer of dimers. Interacts specifically with the aryl carrier protein (ArCP) domain of EntB.

The protein resides in the cytoplasm. It functions in the pathway siderophore biosynthesis; enterobactin biosynthesis. Required for optimal enterobactin synthesis. Acts as a proofreading enzyme that prevents EntB misacylation by hydrolyzing the thioester bound existing between EntB and wrongly charged molecules. The chain is Proofreading thioesterase EntH from Cronobacter turicensis (strain DSM 18703 / CCUG 55852 / LMG 23827 / z3032).